Reading from the N-terminus, the 62-residue chain is LECHNQQSSQTPTTTDCSGGETNCYKKWWSDHRGTIIERGCGCPTVKKGIELNCCTTDRCNN.

The interval 1–20 is disordered; that stretch reads LECHNQQSSQTPTTTDCSGG. Cystine bridges form between C3/C24, C17/C41, C43/C54, and C55/C60.

This sequence belongs to the three-finger toxin family. Short-chain subfamily. Type I alpha-neurotoxin sub-subfamily. Expressed by the venom gland.

Its subcellular location is the secreted. Functionally, nicotinic acetylcholine receptor antagonist. Binds to muscle nicotinic acetylcholine receptor (nAChR) and inhibits acetylcholine from binding to the receptor, thereby impairing neuromuscular transmission. Produces peripheral paralysis by blocking neuromuscular transmission at the postsynaptic site. Induces concentration-dependent inhibition of indirect twitches and abolishes contractile responses of tissues to exogenous acetylcholine and carbachol, in the chick biventer cervicis nerve-muscle preparation at 100-300 nM (in vitro). Prior incubation of tissues with Indian polyvalent antivenom (1 ml/0.6 mg) prevents the neurotoxic effects at 100 nM (in vitro). Addition of Indian polyvalent antivenom (1 ml/0.6 mg) at the t90 time point does not reverse the neurotoxic effects (in vitro). Displays non-competitive antagonism of concentration-response curves to carbachol, with a pA2 of 8.01 (in vitro). This Naja naja (Indian cobra) protein is Alpha-elapitoxin-Nn2a.